The primary structure comprises 120 residues: Large ribosomal subunit protein uL22 (120 aa).

Residues 1 to 22 form a disordered region; that stretch reads MLVNRRYTAKGKNLPSSPKKVR.

This sequence belongs to the universal ribosomal protein uL22 family. As to quaternary structure, part of the 50S ribosomal subunit.

In terms of biological role, this protein binds specifically to 23S rRNA; its binding is stimulated by other ribosomal proteins, e.g. L4, L17, and L20. It is important during the early stages of 50S assembly. It makes multiple contacts with different domains of the 23S rRNA in the assembled 50S subunit and ribosome. Its function is as follows. The globular domain of the protein is located near the polypeptide exit tunnel on the outside of the subunit, while an extended beta-hairpin is found that lines the wall of the exit tunnel in the center of the 70S ribosome. The protein is Large ribosomal subunit protein uL22 of Borreliella burgdorferi (strain ATCC 35210 / DSM 4680 / CIP 102532 / B31) (Borrelia burgdorferi).